A 666-amino-acid chain; its full sequence is Hybrid PKS-NRPS synthetase pytA (666 aa).

In terms of domain architecture, Ketosynthase family 3 (KS3) spans 1–340 (MDPQQRLLLE…GTNAHAILEE (340 aa)). Residues C87, H222, and H260 each act as for beta-ketoacyl synthase activity in the active site. The malonyl-CoA:ACP transacylase (MAT) domain stretch occupies residues 455–665 (VFTGQGAQWF…VFVHSLVIKR (211 aa)). Catalysis depends on S548, which acts as the For malonyltransferase activity.

This sequence in the C-terminal section; belongs to the NRP synthetase family.

The protein operates within secondary metabolite biosynthesis. Hybrid PKS-NRPS synthetase; part of the gene cluster that mediates the biosynthesis of pyranterreones, a family of antioxidative compounds. The first step of pyranonigrins biosynthesis is performed by the hybrid PKS-NRPS synthetase pytA that condenses 4 malonyl-CoA units ato the acetyl starter unit by the modular PKS of pytA. The acyl chain is then connected to an L-serine through the amide bond by the modular NRPS of pytA. A tetramic acid is formed and released from the PKS-NRPS pytA to give pyranterreone 5 with the help of the thioesterase pytI. Pyranterreone 5 could be methylated by pytC to afford pyranterreone 6. Both pyranterreones 5 and 6 are subsequently oxidized by the FAD-linked oxidoreductase pytB and the cytochrome P450 monooxygenase pytD to form the fused gamma-pyrone core, resulting in pyranterreones 7 and 11, respectively. The hydroxy group at C-8 of pyranterreones 7 and 11 are dehydrated by the aspartyl protease pytH to form a delta-7 double bond to give pyranterreones 3 and 1, 2 accordingly. The exo-methylene of pyranterreone 3 could be reduced into a pendant methyl by reductase pytE to provide pyranterreone 4, also known as cordylactam. Pyranterreone 4 can be reconverted to pyranterreone 3 through pytB-catalyzed dehydrogenation or further oxidized to pyranterreones 9 and 10. The polypeptide is Hybrid PKS-NRPS synthetase pytA (Aspergillus terreus (strain NIH 2624 / FGSC A1156)).